Consider the following 49-residue polypeptide: DNA-directed RNA polymerase subunit Rpo12 (49 aa).

Positions 11, 27, and 30 each coordinate Zn(2+).

The protein belongs to the archaeal Rpo12/eukaryotic RPC10 RNA polymerase subunit family. As to quaternary structure, part of the RNA polymerase complex. Requires Zn(2+) as cofactor.

The protein resides in the cytoplasm. The enzyme catalyses RNA(n) + a ribonucleoside 5'-triphosphate = RNA(n+1) + diphosphate. Its function is as follows. DNA-dependent RNA polymerase (RNAP) catalyzes the transcription of DNA into RNA using the four ribonucleoside triphosphates as substrates. The protein is DNA-directed RNA polymerase subunit Rpo12 of Pyrococcus horikoshii (strain ATCC 700860 / DSM 12428 / JCM 9974 / NBRC 100139 / OT-3).